The following is a 490-amino-acid chain: Trigger factor (490 aa).

Residues 161–247 form the PPIase FKBP-type domain; the sequence is GDQVIVDIEA…VHEVKEAELP (87 aa). Over residues 441–460 the composition is skewed to low complexity; the sequence is AEPAEGTEPAAEEAVTAPEV. Residues 441 to 490 form a disordered region; the sequence is AEPAEGTEPAAEEAVTAPEVVDGETTPASESAESLAVTETGSRADDDQAS. Positions 466 to 481 are enriched in polar residues; it reads TPASESAESLAVTETG.

It belongs to the FKBP-type PPIase family. Tig subfamily.

Its subcellular location is the cytoplasm. It catalyses the reaction [protein]-peptidylproline (omega=180) = [protein]-peptidylproline (omega=0). Its function is as follows. Involved in protein export. Acts as a chaperone by maintaining the newly synthesized protein in an open conformation. Functions as a peptidyl-prolyl cis-trans isomerase. The protein is Trigger factor of Thermomicrobium roseum (strain ATCC 27502 / DSM 5159 / P-2).